The primary structure comprises 80 residues: Acyl carrier protein (80 aa).

A Carrier domain is found at 3–78; sequence DDTFSRIQSI…QVLEYIEAES (76 aa). Residue Ser-38 is modified to O-(pantetheine 4'-phosphoryl)serine.

It belongs to the acyl carrier protein (ACP) family. Post-translationally, 4'-phosphopantetheine is transferred from CoA to a specific serine of apo-ACP by AcpS. This modification is essential for activity because fatty acids are bound in thioester linkage to the sulfhydryl of the prosthetic group.

It is found in the plastid. It localises to the chloroplast. It functions in the pathway lipid metabolism; fatty acid biosynthesis. Functionally, carrier of the growing fatty acid chain in fatty acid biosynthesis. The protein is Acyl carrier protein of Trieres chinensis (Marine centric diatom).